The chain runs to 460 residues: Argininosuccinate lyase (460 aa).

It belongs to the lyase 1 family. Argininosuccinate lyase subfamily.

Its subcellular location is the cytoplasm. The catalysed reaction is 2-(N(omega)-L-arginino)succinate = fumarate + L-arginine. Its pathway is amino-acid biosynthesis; L-arginine biosynthesis; L-arginine from L-ornithine and carbamoyl phosphate: step 3/3. The polypeptide is Argininosuccinate lyase (Streptococcus uberis (strain ATCC BAA-854 / 0140J)).